The chain runs to 1035 residues: Ephrin type-A receptor 6 (1035 aa).

An N-terminal signal peptide occupies residues 1-22; that stretch reads MGGCEVREFLLQFGFFLPLLTA. At 23–549 the chain is on the extracellular side; the sequence is WTGDCSHVSN…MAAEQGQILV (527 aa). An Eph LBD domain is found at 33–211; that stretch reads QVVLLDTSTV…FYKKCPFTVR (179 aa). Fibronectin type-III domains follow at residues 330-440 and 441-536; these read PPSA…TDQD and APSL…TGDE. 3 N-linked (GlcNAc...) asparagine glycosylation sites follow: asparagine 342, asparagine 396, and asparagine 409. The helical transmembrane segment at 550-570 threads the bilayer; that stretch reads IATAAVGGFTLLVILTLFFLI. Residues 571–1035 are Cytoplasmic-facing; that stretch reads TGRCQWYIKA…MHIQEKGFHV (465 aa). Phosphotyrosine; by autocatalysis occurs at positions 605 and 611. A Protein kinase domain is found at 630 to 943; the sequence is IRIERVIGAG…RNPSALHTLV (314 aa). ATP contacts are provided by residues 636 to 644 and lysine 662; that span reads IGAGEFGEV. Residue aspartate 797 is the Proton acceptor of the active site. Phosphotyrosine; by autocatalysis is present on residues tyrosine 830 and tyrosine 977. The 65-residue stretch at 960-1024 folds into the SAM domain; the sequence is PLFVTVGDWL…VSSIQTLRLH (65 aa). A PDZ-binding motif is present at residues 1033-1035; sequence FHV.

The protein belongs to the protein kinase superfamily. Tyr protein kinase family. Ephrin receptor subfamily. In terms of assembly, heterotetramer upon binding of the ligand. The heterotetramer is composed of an ephrin dimer and a receptor dimer. Oligomerization is probably required to induce biological responses. Interacts (via SAM domain) with ANKS1A (via SAM domain). In terms of tissue distribution, brain.

The protein resides in the membrane. It carries out the reaction L-tyrosyl-[protein] + ATP = O-phospho-L-tyrosyl-[protein] + ADP + H(+). Receptor tyrosine kinase which binds promiscuously GPI-anchored ephrin-A family ligands residing on adjacent cells, leading to contact-dependent bidirectional signaling into neighboring cells. The signaling pathway downstream of the receptor is referred to as forward signaling while the signaling pathway downstream of the ephrin ligand is referred to as reverse signaling. The polypeptide is Ephrin type-A receptor 6 (Epha6) (Rattus norvegicus (Rat)).